A 70-amino-acid chain; its full sequence is MSNNMAKIAEARKTVEQLKLEVNIDRMKVSQAAAELLAFCETHAKDDPLVTPVPAAENPFRDKRLFCTLL.

A Cysteine methyl ester modification is found at cysteine 67. Cysteine 67 carries S-geranylgeranyl cysteine lipidation. A propeptide spans 68–70 (removed in mature form); that stretch reads TLL.

Belongs to the G protein gamma family. As to quaternary structure, g proteins are composed of 3 units, alpha, beta and gamma. In terms of tissue distribution, detected in the olfactory epithelium, the vomeronasal epithelium and, to a lesser extent, the olfactory bulb.

The protein localises to the cell membrane. Functionally, guanine nucleotide-binding proteins (G proteins) are involved as a modulator or transducer in various transmembrane signaling systems. The beta and gamma chains are required for the GTPase activity, for replacement of GDP by GTP, and for G protein-effector interaction. This subunit may have a very specific role in the development and turnover of olfactory and vomeronasal neurons. This chain is Guanine nucleotide-binding protein G(I)/G(S)/G(O) subunit gamma-8 (Gng8), found in Rattus norvegicus (Rat).